Reading from the N-terminus, the 434-residue chain is Serine hydroxymethyltransferase (434 aa).

(6S)-5,6,7,8-tetrahydrofolate contacts are provided by residues L133 and 137-139 (GHL). K242 bears the N6-(pyridoxal phosphate)lysine mark.

This sequence belongs to the SHMT family. Homodimer. The cofactor is pyridoxal 5'-phosphate.

It is found in the cytoplasm. The enzyme catalyses (6R)-5,10-methylene-5,6,7,8-tetrahydrofolate + glycine + H2O = (6S)-5,6,7,8-tetrahydrofolate + L-serine. It participates in one-carbon metabolism; tetrahydrofolate interconversion. The protein operates within amino-acid biosynthesis; glycine biosynthesis; glycine from L-serine: step 1/1. Catalyzes the reversible interconversion of serine and glycine with tetrahydrofolate (THF) serving as the one-carbon carrier. This reaction serves as the major source of one-carbon groups required for the biosynthesis of purines, thymidylate, methionine, and other important biomolecules. Also exhibits THF-independent aldolase activity toward beta-hydroxyamino acids, producing glycine and aldehydes, via a retro-aldol mechanism. This chain is Serine hydroxymethyltransferase, found in Bradyrhizobium sp. (strain BTAi1 / ATCC BAA-1182).